Reading from the N-terminus, the 166-residue chain is Macrocypin-5a (166 aa).

A disordered region spans residues 20–39 (NIPGGMYASSKDGKDEPVTA).

The protein belongs to the protease inhibitor I85 family.

In terms of biological role, inhibits papain and cysteine cathepsin endopeptidases, and also inhibits cathepsins B and H, which exhibit both exopeptidase and endopeptidase activities. The protein is Macrocypin-5a of Macrolepiota procera (Parasol mushroom).